The chain runs to 77 residues: Large ribosomal subunit protein uL29 (77 aa).

The protein belongs to the universal ribosomal protein uL29 family.

In Corynebacterium jeikeium (strain K411), this protein is Large ribosomal subunit protein uL29.